A 463-amino-acid chain; its full sequence is tRNA-2-methylthio-N(6)-dimethylallyladenosine synthase (463 aa).

An MTTase N-terminal domain is found at 19–135 (GSYWITTFGC…LESLLNQVDS (117 aa)). Residues C28, C64, C98, C170, C174, and C177 each contribute to the [4Fe-4S] cluster site. The 238-residue stretch at 156–393 (RDSSFCGWVN…NSLVENIAKE (238 aa)) folds into the Radical SAM core domain. Residues 396–463 (QRYKNTSQEI…RPFSLTAKLL (68 aa)) form the TRAM domain.

Belongs to the methylthiotransferase family. MiaB subfamily. Monomer. It depends on [4Fe-4S] cluster as a cofactor.

It localises to the cytoplasm. The enzyme catalyses N(6)-dimethylallyladenosine(37) in tRNA + (sulfur carrier)-SH + AH2 + 2 S-adenosyl-L-methionine = 2-methylsulfanyl-N(6)-dimethylallyladenosine(37) in tRNA + (sulfur carrier)-H + 5'-deoxyadenosine + L-methionine + A + S-adenosyl-L-homocysteine + 2 H(+). In terms of biological role, catalyzes the methylthiolation of N6-(dimethylallyl)adenosine (i(6)A), leading to the formation of 2-methylthio-N6-(dimethylallyl)adenosine (ms(2)i(6)A) at position 37 in tRNAs that read codons beginning with uridine. The sequence is that of tRNA-2-methylthio-N(6)-dimethylallyladenosine synthase from Prochlorococcus marinus (strain NATL1A).